A 286-amino-acid chain; its full sequence is MGIRIYKPTSAGRRNASVSDFKELTPGYTPERSLLRPKTKTGGRNNQGKITSRHRGGGHKQKYRVIDFRRVKDGVVATVDSVQYDPNRTARIALLKYPDGEKHYVIAPSGVAAGDKLQNGPDAPPVVGNCLPLKNIPLGTSVCCIEMRAGRGAVMCRSAGTQATLQAREADWAQLLLPSGEVRRVPSACRATIGQVGNSDHMNIVLGKAGRSRWLGRRPHVRGTAMNPIDHPHGGGEGRTKGGRHPVSPSGKSAKGGRTRQKRKPSNSSIVRRRKSRRYGQLKLHK.

Disordered stretches follow at residues 22-59 (KELTPGYTPERSLLRPKTKTGGRNNQGKITSRHRGGGH) and 215-286 (LGRR…KLHK). Residues 230–240 (DHPHGGGEGRT) show a composition bias toward basic and acidic residues. Over residues 255-286 (KGGRTRQKRKPSNSSIVRRRKSRRYGQLKLHK) the composition is skewed to basic residues.

It belongs to the universal ribosomal protein uL2 family. In terms of assembly, part of the 50S ribosomal subunit. Forms a bridge to the 30S subunit in the 70S ribosome.

Functionally, one of the primary rRNA binding proteins. Required for association of the 30S and 50S subunits to form the 70S ribosome, for tRNA binding and peptide bond formation. It has been suggested to have peptidyltransferase activity; this is somewhat controversial. Makes several contacts with the 16S rRNA in the 70S ribosome. The polypeptide is Large ribosomal subunit protein uL2 (Rhodopirellula baltica (strain DSM 10527 / NCIMB 13988 / SH1)).